The sequence spans 317 residues: Melanoma-associated antigen 4 (317 aa).

The segment covering 1-14 has biased composition (basic and acidic residues); it reads MSSEQKSQHCKPEE. The segment at 1–102 is disordered; it reads MSSEQKSQHC…EEGPSTSPDA (102 aa). Residues 66–82 show a composition bias toward polar residues; it reads PQGASALPTTISFTCWR. The MAGE domain maps to 110 to 309; it reads LSNKVDELAH…IAYPSLREAA (200 aa).

In terms of tissue distribution, expressed in many tumors of several types, such as melanoma, head and neck squamous cell carcinoma, lung carcinoma and breast carcinoma, but not in normal tissues except for testes and placenta.

Regulates cell proliferation through the inhibition of cell cycle arrest at the G1 phase. Also negatively regulates p53-mediated apoptosis. The polypeptide is Melanoma-associated antigen 4 (MAGEA4) (Homo sapiens (Human)).